The sequence spans 131 residues: Large ribosomal subunit protein bL17 (131 aa).

Belongs to the bacterial ribosomal protein bL17 family. Part of the 50S ribosomal subunit. Contacts protein L32.

This Vesicomyosocius okutanii subsp. Calyptogena okutanii (strain HA) protein is Large ribosomal subunit protein bL17.